We begin with the raw amino-acid sequence, 181 residues long: UPF0340 protein OB2986 (181 aa).

Belongs to the UPF0340 family.

This is UPF0340 protein OB2986 from Oceanobacillus iheyensis (strain DSM 14371 / CIP 107618 / JCM 11309 / KCTC 3954 / HTE831).